The following is a 463-amino-acid chain: A-type ATP synthase subunit B (463 aa).

It belongs to the ATPase alpha/beta chains family. As to quaternary structure, has multiple subunits with at least A(3), B(3), C, D, E, F, H, I and proteolipid K(x).

Its subcellular location is the cell membrane. Functionally, component of the A-type ATP synthase that produces ATP from ADP in the presence of a proton gradient across the membrane. The B chain is a regulatory subunit. The chain is A-type ATP synthase subunit B from Desulfurococcus sp. (strain SY).